Consider the following 404-residue polypeptide: Lissencephaly-1 homolog (404 aa).

Positions Gln-7–Glu-39 constitute a LisH domain. Positions Thr-54–Ala-81 form a coiled coil. The span at Lys-69 to Ala-89 shows a compositional bias: basic and acidic residues. A disordered region spans residues Lys-69–Ala-90. WD repeat units follow at residues Gly-104 to Lys-145, Gly-146 to Lys-185, Gly-189 to Thr-228, Gly-231 to Val-270, Asp-273 to Thr-327, Ala-330 to Ala-369, and Ala-372 to Arg-404.

It belongs to the WD repeat LIS1/nudF family. Component of a dynein-regulating complex composed of at least lis-1 and nud-2. Interacts with nud-2; the interaction is direct. In terms of tissue distribution, expressed in all classes of neurons in the ventral cord. Expressed in the multinucleate spermathecal valves and adult seam cells.

The protein resides in the cytoplasm. The protein localises to the cytoskeleton. It is found in the microtubule organizing center. It localises to the centrosome. Its subcellular location is the chromosome. The protein resides in the centromere. The protein localises to the kinetochore. It is found in the nucleus envelope. Positively regulates the activity of the minus-end directed microtubule motor protein dynein. May enhance dynein-mediated microtubule sliding by targeting dynein to the microtubule plus end. Required for several dynein- and microtubule-dependent processes such as nuclear migration during cell division. Part of a complex with nud-2, which is recruited to the nuclear envelope by unc-83, where, in turn, it recruits dynein to the nuclear surface and regulates nuclear migration in hypodermal precursor cells. Plays a role in GABAergic synaptic vesicle localization in the ventral nerve cord. Required for neuronal cell differentiation. The chain is Lissencephaly-1 homolog from Caenorhabditis elegans.